The sequence spans 223 residues: Superoxide dismutase [Mn], mitochondrial (223 aa).

The transit peptide at 1–24 (MNLIIGVAGRLLVGKNYCLNTQRL) directs the protein to the mitochondrion. Positions 50, 98, 184, and 188 each coordinate Mn(2+).

It belongs to the iron/manganese superoxide dismutase family. As to quaternary structure, homotetramer. Mn(2+) serves as cofactor.

Its subcellular location is the mitochondrion matrix. The catalysed reaction is 2 superoxide + 2 H(+) = H2O2 + O2. Its function is as follows. Destroys superoxide anion radicals which are normally produced within the cells and which are toxic to biological systems. The protein is Superoxide dismutase [Mn], mitochondrial (sod-2) of Onchocerca volvulus.